Here is a 638-residue protein sequence, read N- to C-terminus: Meiosis initiator protein (638 aa).

Disordered stretches follow at residues methionine 1–proline 21, asparagine 60–threonine 79, leucine 138–glutamine 249, proline 404–arginine 433, and glycine 447–proline 537. Positions tyrosine 7–glycine 20 are enriched in polar residues. The segment at arginine 62–arginine 75 is basic motif; degenerate. Residues arginine 62–leucine 116 form the bHLH domain. Residues lysine 76–leucine 116 form a helix-loop-helix motif region. Over residues threonine 157–serine 167 the composition is skewed to low complexity. The span at threonine 182–threonine 191 shows a compositional bias: polar residues. Over residues proline 412–serine 430 the composition is skewed to basic and acidic residues. The segment covering serine 453 to serine 465 has biased composition (low complexity). A compositionally biased stretch (basic residues) spans lysine 528–proline 537. The HMG box DNA-binding region spans lysine 540 to glycine 608.

As to quaternary structure, interacts with STRA8.

Its subcellular location is the nucleus. Functionally, gatekeeper of meiotic initiation in both male and female germ cells. In complex with STRA8, directly activates the transcription of a subset of critical meiotic genes playing a central role in cell-cycle switching from mitosis to meiosis. Temporal expression of MEIOSIN is required for meiotic entry decision. The chain is Meiosis initiator protein from Homo sapiens (Human).